Consider the following 190-residue polypeptide: Imidazoleglycerol-phosphate dehydratase (190 aa).

This sequence belongs to the imidazoleglycerol-phosphate dehydratase family.

It localises to the cytoplasm. The enzyme catalyses D-erythro-1-(imidazol-4-yl)glycerol 3-phosphate = 3-(imidazol-4-yl)-2-oxopropyl phosphate + H2O. It functions in the pathway amino-acid biosynthesis; L-histidine biosynthesis; L-histidine from 5-phospho-alpha-D-ribose 1-diphosphate: step 6/9. The sequence is that of Imidazoleglycerol-phosphate dehydratase from Wolinella succinogenes (strain ATCC 29543 / DSM 1740 / CCUG 13145 / JCM 31913 / LMG 7466 / NCTC 11488 / FDC 602W) (Vibrio succinogenes).